Consider the following 57-residue polypeptide: Large ribosomal subunit protein bL32 (57 aa).

Belongs to the bacterial ribosomal protein bL32 family.

This is Large ribosomal subunit protein bL32 from Ureaplasma parvum serovar 3 (strain ATCC 27815 / 27 / NCTC 11736).